A 253-amino-acid chain; its full sequence is Fatty acid elongase 5 (253 aa).

7 helical membrane passes run 24-44, 60-80, 100-120, 127-147, 150-170, 188-208, and 214-234; these read IFVS…LVII, IMMI…ISLA, FWIF…VLMI, QLSF…GLLL, GIGN…HFLM, ILTK…SLAP, and FALQ…ILFL. The short motif at 132–136 is the HxxHH motif element; sequence HIYHH. His135 functions as the Nucleophile in the catalytic mechanism.

It belongs to the ELO family.

The protein localises to the membrane. It carries out the reaction an acyl-CoA + malonyl-CoA + H(+) = a 3-oxoacyl-CoA + CO2 + CoA. The protein operates within lipid metabolism; polyunsaturated fatty acid biosynthesis. Its function is as follows. Involved in the synthesis of fatty acids. Elongates C20 polyunsaturated fatty acids (PUFAs) with a preference for n-6 PUFAs. This chain is Fatty acid elongase 5, found in Trypanosoma cruzi (strain CL Brener).